Consider the following 312-residue polypeptide: Acetyl-coenzyme A carboxylase carboxyl transferase subunit beta (312 aa).

A disordered region spans residues M1–P52. A compositionally biased stretch (low complexity) spans P18–T32. The CoA carboxyltransferase N-terminal domain maps to V55–K312. Residues C59, C62, C78, and C81 each coordinate Zn(2+). Residues C59–C81 form a C4-type zinc finger.

The protein belongs to the AccD/PCCB family. In terms of assembly, acetyl-CoA carboxylase is a heterohexamer composed of biotin carboxyl carrier protein (AccB), biotin carboxylase (AccC) and two subunits each of ACCase subunit alpha (AccA) and ACCase subunit beta (AccD). It depends on Zn(2+) as a cofactor.

The protein resides in the cytoplasm. It catalyses the reaction N(6)-carboxybiotinyl-L-lysyl-[protein] + acetyl-CoA = N(6)-biotinyl-L-lysyl-[protein] + malonyl-CoA. It participates in lipid metabolism; malonyl-CoA biosynthesis; malonyl-CoA from acetyl-CoA: step 1/1. Its function is as follows. Component of the acetyl coenzyme A carboxylase (ACC) complex. Biotin carboxylase (BC) catalyzes the carboxylation of biotin on its carrier protein (BCCP) and then the CO(2) group is transferred by the transcarboxylase to acetyl-CoA to form malonyl-CoA. This is Acetyl-coenzyme A carboxylase carboxyl transferase subunit beta from Rhodopirellula baltica (strain DSM 10527 / NCIMB 13988 / SH1).